Here is a 780-residue protein sequence, read N- to C-terminus: ATP-dependent 6-phosphofructokinase, liver type (780 aa).

A2 is subject to N-acetylalanine. Positions 2–390 (ATVDLEKLRM…NWKIYKLLAH (389 aa)) are N-terminal catalytic PFK domain 1. Residues G25, 88 to 89 (RC), and 118 to 121 (GDGS) contribute to the ATP site. Residue D119 participates in Mg(2+) binding. Residues 164 to 166 (SID), R201, 208 to 210 (MGR), E264, R292, and 298 to 301 (HVQR) each bind substrate. Residue D166 is the Proton acceptor of the active site. Residue S377 is modified to Phosphoserine. Residues 391 to 400 (QKVSKEKSNF) form an interdomain linker region. The segment at 401 to 780 (SLAILNVGAP…RRTLSIDKGF (380 aa)) is C-terminal regulatory PFK domain 2. Beta-D-fructose 2,6-bisphosphate contacts are provided by residues R470, 527-531 (TISNN), R565, 572-574 (MGG), and E628. O-linked (GlcNAc) serine glycosylation occurs at S529. At Y640 the chain carries Phosphotyrosine. Beta-D-fructose 2,6-bisphosphate contacts are provided by residues R654, 660–663 (HLQQ), and R734. S775 bears the Phosphoserine mark.

It belongs to the phosphofructokinase type A (PFKA) family. ATP-dependent PFK group I subfamily. Eukaryotic two domain clade 'E' sub-subfamily. In terms of assembly, homo- and heterotetramers. Phosphofructokinase (PFK) enzyme functions as a tetramer composed of different combinations of 3 types of subunits, called PFKM (M), PFKL (L) and PFKP (P). The composition of the PFK tetramer differs according to the tissue type it is present in. The kinetic and regulatory properties of the tetrameric enzyme are dependent on the subunit composition, hence can vary across tissues. Mg(2+) serves as cofactor. Post-translationally, glcNAcylation at Ser-529 by OGT decreases enzyme activity, leading to redirect glucose flux through the oxidative pentose phosphate pathway. Glycosylation is stimulated by both hypoxia and glucose deprivation.

It localises to the cytoplasm. It catalyses the reaction beta-D-fructose 6-phosphate + ATP = beta-D-fructose 1,6-bisphosphate + ADP + H(+). It functions in the pathway carbohydrate degradation; glycolysis; D-glyceraldehyde 3-phosphate and glycerone phosphate from D-glucose: step 3/4. With respect to regulation, allosterically activated by ADP, AMP, or fructose 2,6-bisphosphate, and allosterically inhibited by ATP or citrate. GlcNAcylation by OGT overcomes allosteric regulation. Functionally, catalyzes the phosphorylation of D-fructose 6-phosphate to fructose 1,6-bisphosphate by ATP, the first committing step of glycolysis. Negatively regulates the phagocyte oxidative burst in response to bacterial infection by controlling cellular NADPH biosynthesis and NADPH oxidase-derived reactive oxygen species. Upon macrophage activation, drives the metabolic switch toward glycolysis, thus preventing glucose turnover that produces NADPH via pentose phosphate pathway. This chain is ATP-dependent 6-phosphofructokinase, liver type (Pfkl), found in Rattus norvegicus (Rat).